The primary structure comprises 203 residues: Small ribosomal subunit protein uS4 (203 aa).

The region spanning 93 to 156 is the S4 RNA-binding domain; the sequence is RRLDNVVYRL…MKVPAILEAV (64 aa).

The protein belongs to the universal ribosomal protein uS4 family. In terms of assembly, part of the 30S ribosomal subunit. Contacts protein S5. The interaction surface between S4 and S5 is involved in control of translational fidelity.

One of the primary rRNA binding proteins, it binds directly to 16S rRNA where it nucleates assembly of the body of the 30S subunit. Its function is as follows. With S5 and S12 plays an important role in translational accuracy. The protein is Small ribosomal subunit protein uS4 of Streptococcus pyogenes serotype M1.